A 388-amino-acid polypeptide reads, in one-letter code: MDLFEYQAKKLFAEHGVPVPTGKTATTPEEARAIATELGGRVVVKAQVKTGGRGKAGGVKVADGPDDAFAKATAILGMDIKGHTVHSVLVEEASNIAEEYYASFLLDRANRTFLAMASREGGMEIEEVAATKPEALARIAIDPLKGVDAAKAREIAVAAKLPEAALDGASELLAKLWTVFVKSDATLVEVNPLILTGDGRVVALDGKVSLDDNADFRHPEHEAFVDVAAVDPLEQKAKEKGLNYVKLEGEVGIIGNGAGLVMSTLDVVTYAGEEFGGKRPANFLDIGGGASAEVMANGLSIILGDPAVKSVFVNIFGGITSCDAVANGIVQALKIVGDVSTPLVVRLDGNNAEEGRRILAEANLPVVKPVDTMDGAAKLAAELAAAAA.

Positions 9–236 (KKLFAEHGVP…VAAVDPLEQK (228 aa)) constitute an ATP-grasp domain. ATP contacts are provided by residues Lys-45, 52–54 (GRG), Glu-91, Ser-94, and Glu-99. 2 residues coordinate Mg(2+): Asn-191 and Asp-205. Substrate-binding positions include Asn-256 and 318 to 320 (GIT).

It belongs to the succinate/malate CoA ligase beta subunit family. In terms of assembly, heterotetramer of two alpha and two beta subunits. It depends on Mg(2+) as a cofactor.

The catalysed reaction is succinate + ATP + CoA = succinyl-CoA + ADP + phosphate. The enzyme catalyses GTP + succinate + CoA = succinyl-CoA + GDP + phosphate. The protein operates within carbohydrate metabolism; tricarboxylic acid cycle; succinate from succinyl-CoA (ligase route): step 1/1. Succinyl-CoA synthetase functions in the citric acid cycle (TCA), coupling the hydrolysis of succinyl-CoA to the synthesis of either ATP or GTP and thus represents the only step of substrate-level phosphorylation in the TCA. The beta subunit provides nucleotide specificity of the enzyme and binds the substrate succinate, while the binding sites for coenzyme A and phosphate are found in the alpha subunit. This Frankia casuarinae (strain DSM 45818 / CECT 9043 / HFP020203 / CcI3) protein is Succinate--CoA ligase [ADP-forming] subunit beta.